The primary structure comprises 907 residues: Probable disease resistance protein At1g58390 (907 aa).

The region spanning 144–456 is the NB-ARC domain; it reads QGDRQREMRQ…AEGISTAEDY (313 aa). 190–197 serves as a coordination point for ATP; that stretch reads GMGGLGKT. LRR repeat units lie at residues 608–631 and 843–868; these read LIHL…LGNL and MPLL…RFIY.

The protein belongs to the disease resistance NB-LRR family.

Its function is as follows. Possible disease resistance protein. This Arabidopsis thaliana (Mouse-ear cress) protein is Probable disease resistance protein At1g58390.